The chain runs to 479 residues: Ribulose bisphosphate carboxylase large chain (479 aa).

Residues Met-1–Ser-2 constitute a propeptide that is removed on maturation. Asn-123 and Thr-173 together coordinate substrate. Lys-175 (proton acceptor) is an active-site residue. Lys-177 contributes to the substrate binding site. Mg(2+) is bound by residues Lys-201, Asp-203, and Glu-204. At Lys-201 the chain carries N6-carboxylysine. Ser-208 is subject to Phosphoserine. His-294 serves as the catalytic Proton acceptor. Substrate contacts are provided by Arg-295 and His-327. Position 330 is a phosphothreonine (Thr-330). Ser-379 serves as a coordination point for substrate.

It belongs to the RuBisCO large chain family. Type I subfamily. As to quaternary structure, heterohexadecamer of 8 large chains and 8 small chains; disulfide-linked. The disulfide link is formed within the large subunit homodimers. It depends on Mg(2+) as a cofactor. In terms of processing, the disulfide bond which can form in the large chain dimeric partners within the hexadecamer appears to be associated with oxidative stress and protein turnover.

The protein localises to the plastid. It localises to the chloroplast. The enzyme catalyses 2 (2R)-3-phosphoglycerate + 2 H(+) = D-ribulose 1,5-bisphosphate + CO2 + H2O. It carries out the reaction D-ribulose 1,5-bisphosphate + O2 = 2-phosphoglycolate + (2R)-3-phosphoglycerate + 2 H(+). Functionally, ruBisCO catalyzes two reactions: the carboxylation of D-ribulose 1,5-bisphosphate, the primary event in carbon dioxide fixation, as well as the oxidative fragmentation of the pentose substrate in the photorespiration process. Both reactions occur simultaneously and in competition at the same active site. The polypeptide is Ribulose bisphosphate carboxylase large chain (Lobularia maritima (Sweet alyssum)).